The sequence spans 581 residues: Guanine nucleotide-binding protein-like 3 homolog (581 aa).

Basic residues predominate over residues 1–49 (MALKRLKTKKSKRLTGRLKHKIEKKVRDHNKKERRAAKKNPKKGSKKQK). The segment at 1–50 (MALKRLKTKKSKRLTGRLKHKIEKKVRDHNKKERRAAKKNPKKGSKKQKL) is disordered. Positions 64 to 108 (LKEVEEAKQRQEAERLARREAFKAEREQNKFKTLESMVEDADMRS) form a coiled coil. Ser99 carries the phosphoserine modification. The 185-residue stretch at 141–325 (FKEFRKVIEN…LIDCPGIVFT (185 aa)) folds into the CP-type G domain. GTP is bound by residues 189-192 (NKAD), 274-281 (GIPNVGKS), and 318-321 (DCPG). A compositionally biased stretch (basic and acidic residues) spans 500–517 (KPAKGRKRKLDEEKEKVD). Residues 500 to 519 (KPAKGRKRKLDEEKEKVDPS) form a disordered region.

Belongs to the TRAFAC class YlqF/YawG GTPase family.

It is found in the nucleus. The protein localises to the nucleolus. Its function is as follows. May play a role in regulating cellular proliferation. The polypeptide is Guanine nucleotide-binding protein-like 3 homolog (Ns1) (Drosophila melanogaster (Fruit fly)).